The chain runs to 208 residues: Proheparin-binding EGF-like growth factor (208 aa).

An N-terminal signal peptide occupies residues 1-23; sequence MKLLPSVVLKLFLAAVLSALVTG. Residues 24–62 constitute a propeptide that is removed on maturation; that stretch reads ESLERLRRGLAAATSNPDPPTGTTNQLLPTGADRAQEVQ. Residues 24 to 160 are Extracellular-facing; sequence ESLERLRRGL…ENPLYTYDHT (137 aa). The disordered stretch occupies residues 82 to 103; it reads ALATPGKEKNGKKKRKGKGLGK. Thr85 carries an O-linked (GalNAc...) threonine glycan. Residues 91–102 show a composition bias toward basic residues; the sequence is NGKKKRKGKGLG. The EGF-like domain maps to 104-144; it reads KRDPCLKKYKDYCIHGECRYLKELRIPSCHCLPGYHGQRCH. 3 disulfides stabilise this stretch: Cys108-Cys121, Cys116-Cys132, and Cys134-Cys143. Residues 149–208 constitute a propeptide, C-terminal; that stretch reads PVENPLYTYDHTTVLAVVAVVLSSVCLLVIVGLLMFRYHRRGGYDLESEEKVKLGMASSH. The chain crosses the membrane as a helical span at residues 161 to 184; sequence TVLAVVAVVLSSVCLLVIVGLLMF. Topologically, residues 185–208 are cytoplasmic; the sequence is RYHRRGGYDLESEEKVKLGMASSH.

As to quaternary structure, interacts with FBLN1. Interacts with EGFR and ERBB4. In terms of processing, O-glycosylated. As to expression, most abundant in skeletal muscle, lung, spleen brain and heart.

It is found in the secreted. The protein resides in the extracellular space. The protein localises to the cell membrane. Growth factor that mediates its effects via EGFR, ERBB2 and ERBB4. Required for normal cardiac valve formation and normal heart function. Promotes smooth muscle cell proliferation. May be involved in macrophage-mediated cellular proliferation. It is mitogenic for fibroblasts, but not endothelial cells. It is able to bind EGF receptor/EGFR with higher affinity than EGF itself and is a far more potent mitogen for smooth muscle cells than EGF. Also acts as a diphtheria toxin receptor. This chain is Proheparin-binding EGF-like growth factor (Hbegf), found in Rattus norvegicus (Rat).